A 386-amino-acid chain; its full sequence is Succinate--CoA ligase [ADP-forming] subunit beta (386 aa).

The ATP-grasp domain maps to 9–244 (KEILRKYGVP…HDEEDPLETR (236 aa)). Residues Lys46, 53–55 (GRG), Glu99, Cys102, and Glu107 contribute to the ATP site. The Mg(2+) site is built by Asn199 and Asp213. Residues Asn264 and 321–323 (GIM) contribute to the substrate site.

It belongs to the succinate/malate CoA ligase beta subunit family. Heterotetramer of two alpha and two beta subunits. Mg(2+) is required as a cofactor.

The catalysed reaction is succinate + ATP + CoA = succinyl-CoA + ADP + phosphate. It carries out the reaction GTP + succinate + CoA = succinyl-CoA + GDP + phosphate. It functions in the pathway carbohydrate metabolism; tricarboxylic acid cycle; succinate from succinyl-CoA (ligase route): step 1/1. Its function is as follows. Succinyl-CoA synthetase functions in the citric acid cycle (TCA), coupling the hydrolysis of succinyl-CoA to the synthesis of either ATP or GTP and thus represents the only step of substrate-level phosphorylation in the TCA. The beta subunit provides nucleotide specificity of the enzyme and binds the substrate succinate, while the binding sites for coenzyme A and phosphate are found in the alpha subunit. In Rickettsia akari (strain Hartford), this protein is Succinate--CoA ligase [ADP-forming] subunit beta.